The sequence spans 146 residues: MKLHELQPAAGSRKVRNRVGRGTSSGNGKTAGRGQKGQKARSGGGVRLGFEGGQTPLFRRLPKRGFLNVNRKEYAIVNLDQLNAFEDGAEVTPVVLVESGIVKAEKSGVKILGNGELTKKLTVKAAKFSKSAEEAITAKGGSVEVI.

The interval 1–51 (MKLHELQPAAGSRKVRNRVGRGTSSGNGKTAGRGQKGQKARSGGGVRLGFE) is disordered. Gly residues-rich tracts occupy residues 23 to 35 (TSSGNGKTAGRGQ) and 42 to 51 (SGGGVRLGFE).

The protein belongs to the universal ribosomal protein uL15 family. As to quaternary structure, part of the 50S ribosomal subunit.

Binds to the 23S rRNA. This is Large ribosomal subunit protein uL15 from Streptococcus gordonii (strain Challis / ATCC 35105 / BCRC 15272 / CH1 / DL1 / V288).